The chain runs to 730 residues: MDAKTDDKDAGKCPFSSGSHAHRNRDWWPDQLDIQVLHHNSKKSDPLGEAFNYAEEFKKLDLAALKQDLTALMTDSQDWWPADFGHYGGLFIRLAWHSAGTYRISDGRGGAGAGQQRFAPLNSWPDNANLDKARRLLWPIKQKYGNKISWADLFVLSGNVALESMGFKTFGFAGGRADTWEPEELYWGPEGTWLGDSRYSGERELSDPLGAVQMGLIYVNPEGPNGNPDPVGSAKDIRETFYRMAMNDEETVALIAGGHTFGKTHGAGDPSLLGPDPEAGALEDQGLGWKSGYGTGFGADAITGGPEVIWSQEPTKWSNHFFENLFNFDYELTKSPAGAQQWVAKNAEPSIPDPFDPSKKRLPTMLTSDLALRFDPIYEKISRRFFENPDQFADAFARAWYKLTHRDMGPVPRYLGPEVPKEVLLWQDPVPAVDHELVSEQDIAALKAKILASGLSVAQLVSAAWASASTFRGSDKRGGANGGRIRLSPQKDWEVNHPAELAQVLSKLEAIQSEFNAQGGGKKVSIADLIVLGGAAAIEKAAQEAGTAVTVPFTPGRTDASQEQTDVESFKPLEPRADGFRNYVSSIRHQFMKPEEALVDKAQLLKLTGPELTVLVGGLRVLGANYGHTTHGVLTDRPERLSNDFFVNLLDMKYAWAPSPTTTGIYEARDRKSGELKWTGTRVDLIFGSHSQLRAFAEVYAQADAKEKFVHDFVAAWTKVMNADRFDIVR.

Basic and acidic residues predominate over residues 1–11 (MDAKTDDKDAG). A signal peptide spans 1-21 (MDAKTDDKDAGKCPFSSGSHA). Positions 1–24 (MDAKTDDKDAGKCPFSSGSHAHRN) are disordered. The segment at residues 96–218 (WHSAGTYRIS…LGAVQMGLIY (123 aa)) is a cross-link (tryptophyl-tyrosyl-methioninium (Trp-Tyr) (with M-244)). Histidine 97 (proton acceptor) is an active-site residue. The tryptophyl-tyrosyl-methioninium (Tyr-Met) (with W-96) cross-link spans 218–244 (YVNPEGPNGNPDPVGSAKDIRETFYRM). Histidine 259 lines the heme b pocket.

This sequence belongs to the peroxidase family. Peroxidase/catalase subfamily. Homodimer or homotetramer. It depends on heme b as a cofactor. Formation of the three residue Trp-Tyr-Met cross-link is important for the catalase, but not the peroxidase activity of the enzyme.

The enzyme catalyses H2O2 + AH2 = A + 2 H2O. It carries out the reaction 2 H2O2 = O2 + 2 H2O. Functionally, bifunctional enzyme with both catalase and broad-spectrum peroxidase activity. The polypeptide is Catalase-peroxidase (Rhodopseudomonas palustris (strain BisA53)).